The chain runs to 259 residues: DNA repair protein RecO (259 aa).

Belongs to the RecO family.

In terms of biological role, involved in DNA repair and RecF pathway recombination. In Chloroherpeton thalassium (strain ATCC 35110 / GB-78), this protein is DNA repair protein RecO.